Here is a 526-residue protein sequence, read N- to C-terminus: ATP synthase subunit alpha (526 aa).

Glycine 171–threonine 178 lines the ATP pocket.

It belongs to the ATPase alpha/beta chains family. F-type ATPases have 2 components, CF(1) - the catalytic core - and CF(0) - the membrane proton channel. CF(1) has five subunits: alpha(3), beta(3), gamma(1), delta(1), epsilon(1). CF(0) has four main subunits: a(1), b(1), b'(1) and c(9-12).

It is found in the cell inner membrane. It catalyses the reaction ATP + H2O + 4 H(+)(in) = ADP + phosphate + 5 H(+)(out). Its function is as follows. Produces ATP from ADP in the presence of a proton gradient across the membrane. The alpha chain is a regulatory subunit. The protein is ATP synthase subunit alpha of Chlorobium phaeobacteroides (strain DSM 266 / SMG 266 / 2430).